The chain runs to 232 residues: Phospholipase A2 hemilipin (232 aa).

The first 18 residues, 1–18 (MTFLILTILATVTPSLYS), serve as a signal peptide directing secretion. Residues 19–105 (HVVQRELRVN…QRCSGSAEGR (87 aa)) constitute a propeptide that is removed on maturation. 3 residues coordinate Ca(2+): W115, G117, and G119. Cystine bridges form between C116-C137, C136-C175, C143-C168, C166-C206, and C211-C219. Residue N124 is glycosylated (N-linked (GlcNAc...) asparagine). H140 is a catalytic residue. A Ca(2+)-binding site is contributed by D141. N-linked (GlcNAc...) asparagine glycosylation occurs at N157. A propeptide spanning residues 214-217 (KRDA) is cleaved from the precursor.

Belongs to the phospholipase A2 family. Group III subfamily. As to quaternary structure, heterodimer composed of a small subunit and a large subunit; disulfid-linked. Ca(2+) serves as cofactor. As to expression, expressed by the venom gland.

It localises to the secreted. It carries out the reaction a 1,2-diacyl-sn-glycero-3-phosphocholine + H2O = a 1-acyl-sn-glycero-3-phosphocholine + a fatty acid + H(+). Scorpion venom phospholipase A2 (PLA2) that shows high hydrolytic activities towards lecithin and acts as an effective blocker of all angiogenesis key steps in vivo and in vitro. It has no effect on apoptosis and does not display hemolytic, inflammatory or neurotoxic effects. PLA2 catalyzes the calcium-dependent hydrolysis of the 2-acyl groups in 3-sn-phosphoglycerides. This is Phospholipase A2 hemilipin from Hemiscorpius lepturus (Scorpion).